The chain runs to 55 residues: Large ribosomal subunit protein bL33 (55 aa).

It belongs to the bacterial ribosomal protein bL33 family.

In Bradyrhizobium sp. (strain BTAi1 / ATCC BAA-1182), this protein is Large ribosomal subunit protein bL33.